Reading from the N-terminus, the 484-residue chain is Ankyrin repeat protein T5 (484 aa).

ANK repeat units follow at residues 33-64 (MDDTPFSLYLTRYDCTLETLRLFLKRGVDVNG), 68-102 (TRTSPLCTVLSNKELGKEAETLAMCLIDAGADVNA), 106-138 (DGRYPLLCLLENDRINTTSFVKYMIDRGTLVCV), 142-173 (DGCGPIQTYLRSKNVVLETLHVLVRAGASIHD), 178-211 (YGFNILQCYMISHVRSSDVRILRFLAGQGVNSSQ), 251-280 (LDFTPINYCVIHNDRRTFDYLLEKGANPNV), and 284-313 (LGNSCLDLAVLNGNKYMTLRLLRKTITPDA).

This is Ankyrin repeat protein T5 from Rabbit fibroma virus (strain Kasza) (RFV).